A 274-amino-acid chain; its full sequence is Large ribosomal subunit protein bL28m (274 aa).

The segment at 249–274 (SETEEFGLGQEEDLFMKEEPKPTKMA) is disordered. A compositionally biased stretch (basic and acidic residues) spans 262-274 (LFMKEEPKPTKMA).

This sequence belongs to the bacterial ribosomal protein bL28 family. As to quaternary structure, component of the mitochondrial large ribosomal subunit (mt-LSU). Mature N.crassa 74S mitochondrial ribosomes consist of a small (37S) and a large (54S) subunit. The 37S small subunit contains a 16S ribosomal RNA (16S mt-rRNA) and 32 different proteins. The 54S large subunit contains a 23S rRNA (23S mt-rRNA) and 42 different proteins.

It is found in the mitochondrion. In terms of biological role, component of the mitochondrial ribosome (mitoribosome), a dedicated translation machinery responsible for the synthesis of mitochondrial genome-encoded proteins, including at least some of the essential transmembrane subunits of the mitochondrial respiratory chain. The mitoribosomes are attached to the mitochondrial inner membrane and translation products are cotranslationally integrated into the membrane. The chain is Large ribosomal subunit protein bL28m (mrpl24) from Neurospora crassa (strain ATCC 24698 / 74-OR23-1A / CBS 708.71 / DSM 1257 / FGSC 987).